Consider the following 380-residue polypeptide: Glycogenin-2 (380 aa).

Residues L10, Y16, and R95 each coordinate UDP. Positions 10, 16, 95, 104, 120, 121, 122, 158, 159, 185, 188, and 189 each coordinate UDP-alpha-D-glucose. Positions 120, 121, and 122 each coordinate UDP. Residue D120 coordinates Mn(2+). D122 contacts Mn(2+). Y230 and Y232 each carry an O-linked (Glc...) tyrosine glycan. 3 residues coordinate UDP: H249, G252, and K255. H249 lines the Mn(2+) pocket. Positions 252 and 255 each coordinate UDP-alpha-D-glucose. The interval 331–357 (SVDRNASQKSTAEKHDIEKPTSKPQSA) is disordered. Residues 341–351 (TAEKHDIEKPT) are compositionally biased toward basic and acidic residues. Y367 is a glycosylation site (O-linked (Glc...) tyrosine).

This sequence belongs to the glycosyltransferase 8 family. Glycogenin subfamily. In terms of assembly, interacts with glycogen synthase GSY2. Requires Mn(2+) as cofactor.

Its subcellular location is the cytoplasm. The protein resides in the vacuole. The enzyme catalyses L-tyrosyl-[glycogenin] + UDP-alpha-D-glucose = alpha-D-glucosyl-L-tyrosyl-[glycogenin] + UDP + H(+). It catalyses the reaction [1,4-alpha-D-glucosyl](n)-L-tyrosyl-[glycogenin] + UDP-alpha-D-glucose = [1,4-alpha-D-glucosyl](n+1)-L-tyrosyl-[glycogenin] + UDP + H(+). Functionally, self-glucosylating initiator of glycogen synthesis. It catalyzes the formation of a short alpha (1,4)-glucosyl chain covalently attached via a glucose 1-O-tyrosyl linkage to internal tyrosine residues and these chains act as primers for the elongation reaction catalyzed by glycogen synthase. Capable of transferring glucosyl residues to unbound acceptors such as free oligoglucans or oligoglucan derivatives. The chain is Glycogenin-2 (GLG2) from Saccharomyces cerevisiae (strain YJM789) (Baker's yeast).